Reading from the N-terminus, the 500-residue chain is NAD(P)H-quinone oxidoreductase chain 4, chloroplastic (500 aa).

14 helical membrane-spanning segments follow: residues 4–24 (FPWL…LFFL), 31–51 (LIKW…TYAF), 87–107 (IGPI…AWPV), 113–130 (LFHF…GSFS), 134–154 (LLLF…LLSM), 167–187 (FILY…GLGL), 208–228 (ALEI…SPII), 242–262 (HYST…YGLV), 272–292 (AHSI…IYAA), 305–325 (IAYS…SITD), 330–350 (GAIL…FLAG), 386–406 (LALP…GIIT), 416–436 (ILIT…SLSM), and 462–482 (LFVS…PDFV).

Belongs to the complex I subunit 4 family.

It is found in the plastid. It localises to the chloroplast thylakoid membrane. It carries out the reaction a plastoquinone + NADH + (n+1) H(+)(in) = a plastoquinol + NAD(+) + n H(+)(out). The enzyme catalyses a plastoquinone + NADPH + (n+1) H(+)(in) = a plastoquinol + NADP(+) + n H(+)(out). The chain is NAD(P)H-quinone oxidoreductase chain 4, chloroplastic from Gossypium barbadense (Sea Island cotton).